A 1673-amino-acid polypeptide reads, in one-letter code: AF4/FMR2 family member lilli (1673 aa).

9 disordered regions span residues Met1–Asn24, Tyr54–Ile80, Ser125–Lys302, Gln407–Asn534, Val575–Trp604, Arg722–Leu1086, Gln1114–Pro1133, Arg1141–Thr1160, and Lys1187–Glu1315. Basic and acidic residues predominate over residues Arg71 to Ile80. Low complexity-rich tracts occupy residues Ser146–Gln180 and Pro223–Val244. Phosphothreonine is present on Thr420. A compositionally biased stretch (basic and acidic residues) spans Leu428 to Ser441. Over residues Leu443 to Asp454 the composition is skewed to acidic residues. Phosphoserine is present on residues Ser450 and Ser452. Residues Gly465–Asn486 show a composition bias toward low complexity. The segment covering His491–Gln500 has biased composition (basic residues). The segment covering Leu501 to Gln525 has biased composition (low complexity). Residues Thr577–Ser586 show a composition bias toward gly residues. Residues Lys594–Trp604 show a composition bias toward polar residues. Over residues Ser724–Glu757 the composition is skewed to low complexity. Residues Gln775–Val788 show a composition bias toward polar residues. The span at Gln802–Ala812 shows a compositional bias: basic residues. 2 positions are modified to phosphoserine: Ser821 and Ser822. Positions Lys851–Ser863 form a DNA-binding region, a.T hook. Residues Gln860 to Ala898 show a composition bias toward low complexity. Phosphoserine occurs at positions 871 and 873. The span at Ser909–Thr919 shows a compositional bias: polar residues. 2 stretches are compositionally biased toward low complexity: residues Ser949–Ser965 and Gly993–Ser1004. Positions Thr1011–Ala1022 are enriched in polar residues. A compositionally biased stretch (low complexity) spans Ser1034–Ser1060. Over residues Glu1065–Lys1082 the composition is skewed to basic and acidic residues. A compositionally biased stretch (polar residues) spans Pro1190–Asn1205. 2 stretches are compositionally biased toward basic and acidic residues: residues Glu1226–Phe1243 and Phe1252–Pro1282. Ser1362 carries the phosphoserine modification. Phosphothreonine is present on Thr1364. Over residues Asn1564 to Asn1583 the composition is skewed to low complexity. Positions Asn1564–Arg1588 are disordered.

It belongs to the AF4 family. In terms of assembly, component of the super elongation complex (SEC), at least composed of Ell, Cdk9, cyclin-T (CycT), lilli and ear.

The protein resides in the nucleus. Functionally, has a role in transcriptional regulation. Acts in parallel with the Ras/MAPK and the PI3K/PKB pathways in the control of cell identity and cellular growth. Essential for regulation of the cytoskeleton and cell growth but not for cell proliferation or growth rate. Required specifically for the microtubule-based basal transport of lipid droplets. Plays a partially redundant function downstream of Raf in cell fate specification in the developing eye. Pair-rule protein that regulates embryonic cellularization, gastrulation and segmentation. The chain is AF4/FMR2 family member lilli from Drosophila melanogaster (Fruit fly).